Consider the following 154-residue polypeptide: UPF0756 membrane protein RBAM_026200 (154 aa).

Transmembrane regions (helical) follow at residues 14 to 34 (AIALVAKNQSLLFAVGFLIVI), 54 to 74 (WGVTVITIAVLVPIATGDIGF), 87 to 107 (WIALGAGIAVALIAKNGLTLL), and 117 to 137 (LVIGTILAVALFGGVAVGPLI).

The protein belongs to the UPF0756 family.

The protein resides in the cell membrane. In Bacillus velezensis (strain DSM 23117 / BGSC 10A6 / LMG 26770 / FZB42) (Bacillus amyloliquefaciens subsp. plantarum), this protein is UPF0756 membrane protein RBAM_026200.